We begin with the raw amino-acid sequence, 410 residues long: Na(+)/H(+) antiporter NhaA 1/4 (410 aa).

The next 11 membrane-spanning stretches (helical) occupy residues 16 to 36 (VGGS…NSPL), 55 to 75 (LNLS…FFIV), 95 to 115 (ALPI…FLAF), 125 to 145 (GGWG…LAVV), 156 to 176 (FLLT…AVAC), 178 to 198 (SGIN…FGYL), 215 to 235 (AWLL…ACGV), 275 to 295 (IALP…AGGF), 299 to 319 (AITW…IFGG), 340 to 360 (IAGI…IAEL), and 371 to 391 (AKGA…LLLG).

Belongs to the NhaA Na(+)/H(+) (TC 2.A.33) antiporter family.

It localises to the cell membrane. The enzyme catalyses Na(+)(in) + 2 H(+)(out) = Na(+)(out) + 2 H(+)(in). Its function is as follows. Na(+)/H(+) antiporter that extrudes sodium in exchange for external protons. In Streptomyces coelicolor (strain ATCC BAA-471 / A3(2) / M145), this protein is Na(+)/H(+) antiporter NhaA 1/4.